The following is an 86-amino-acid chain: MIKLRLKRFGKKREASYRIVAINNLARRDGRPLEELGFYNPRTDEVRLDVPGIVKRLQQGAQPTDTVRRILVKANVFEQVSATAAS.

It belongs to the bacterial ribosomal protein bS16 family.

The chain is Small ribosomal subunit protein bS16 from Nostoc punctiforme (strain ATCC 29133 / PCC 73102).